The sequence spans 330 residues: Aspartate--ammonia ligase (330 aa).

It belongs to the class-II aminoacyl-tRNA synthetase family. AsnA subfamily.

The protein localises to the cytoplasm. It carries out the reaction L-aspartate + NH4(+) + ATP = L-asparagine + AMP + diphosphate + H(+). The protein operates within amino-acid biosynthesis; L-asparagine biosynthesis; L-asparagine from L-aspartate (ammonia route): step 1/1. The chain is Aspartate--ammonia ligase from Salmonella paratyphi A (strain ATCC 9150 / SARB42).